A 568-amino-acid polypeptide reads, in one-letter code: Phosphoprotein (568 aa).

Disordered regions lie at residues 1–22 and 40–320; these read MDQD…PGGR and PTDI…GIGE. Positions 7 to 20 are enriched in basic and acidic residues; sequence ILKEDSEVERKAPG. The segment at 33-41 is N0 binding; sequence DAVLSSEPT. The span at 50–60 shows a compositional bias: polar residues; that stretch reads LHNTINTSQGP. Serine 68 bears the Phosphoserine; by host mark. Basic and acidic residues predominate over residues 83–101; it reads RSGEESRVSGRTSKPEAEA. Residue serine 125 is modified to Phosphoserine; by host. Over residues 150–168 the composition is skewed to basic and acidic residues; it reads GIEDENREMAAHPDKRGED. Over residues 191 to 206 the composition is skewed to polar residues; it reads ASNNGRSMEPGSSHSA. Phosphoserine; by host is present on residues serine 192, serine 249, and serine 257. A multimerization region spans residues 344-411; it reads FESSRDASYV…SFRDIYKRFS (68 aa). Positions 364-429 form a coiled coil; the sequence is YAEMTFNVCG…LLMSNLSTLH (66 aa). The tract at residues 412–445 is l protein binding; the sequence is EYQKEQNSLLMSNLSTLHIITDRGGKTDNTDSLT. A phosphoserine; by host mark is found at serine 447 and serine 449. Residues 479–568 form an interaction with the nucleocapsid (N-RNA) region; it reads DLIREDEFRD…VEEDIESLTN (90 aa).

This sequence belongs to the respirovirus P protein family. Homotetramer. Interacts (via multimerization domain) with polymerase L; this interaction forms the polymerase complex. Interacts (via N-terminus) with N0; this interaction allows P to chaperon N0 before encapsidation and form the N-P complex. Interacts (via C-terminus) with N-RNA template; this interaction positions the polymerase on the template. Post-translationally, phosphorylated by PKC/PRKCZ, and other unknown kinases. Phosphorylation is necessary for viral transcription and replication. The N-terminus contains the majority of phosphorylated sites. Ser-249 is the major site of phosphorylation, but is not necessary for most functions.

It is found in the host cytoplasm. Functionally, essential cofactor of the RNA polymerase L that plays a central role in the transcription and replication by forming the polymerase complex with RNA polymerase L and recruiting L to the genomic N-RNA template for RNA synthesis. Also plays a central role in the encapsidation of nascent RNA chains by forming the encapsidation complex with the nucleocapsid protein N (N-P complex). Acts as a chaperone for newly synthesized free N protein, so-called N0, allowing encapsidation of nascent RNA chains during replication. The nucleoprotein protein N prevents excessive phosphorylation of P, which leads to down-regulation of viral transcription/ replication. Participates, together with N, in the formation of viral factories (viroplasms), which are large inclusions in the host cytoplasm where replication takes place. Recruits host PI4KB and remodel the host endoplasmic reticulum membrane to form viral replication factories. This is Phosphoprotein (P/V/C) from Sendai virus (strain 6/94) (SeV).